Reading from the N-terminus, the 121-residue chain is uncharacterized protein (121 aa).

This is an uncharacterized protein from Schizosaccharomyces pombe (strain 972 / ATCC 24843) (Fission yeast).